The following is a 154-amino-acid chain: MVLTDAEWHLVLNIWAKVEADVAGHGQDILISLFKGHPETLEKFDKFKHLKTEAEMKASEDLKKHGNTVLTALGGILKKKGHHEAELKPLAQSHATKHKIPIKYLEFISDAIIHVLHSRHPADFGADAQAAMNKALELFRKDIAAKYKELGFQG.

The 147-residue stretch at 2-148 (VLTDAEWHLV…FRKDIAAKYK (147 aa)) folds into the Globin domain. Nitrite is bound at residue histidine 65. An O2-binding site is contributed by histidine 65. Residue threonine 68 is modified to Phosphothreonine. Histidine 94 serves as a coordination point for heme b.

It belongs to the globin family. Monomeric.

It is found in the cytoplasm. The protein localises to the sarcoplasm. It carries out the reaction Fe(III)-heme b-[protein] + nitric oxide + H2O = Fe(II)-heme b-[protein] + nitrite + 2 H(+). The enzyme catalyses H2O2 + AH2 = A + 2 H2O. Functionally, monomeric heme protein which primary function is to store oxygen and facilitate its diffusion within muscle tissues. Reversibly binds oxygen through a pentacoordinated heme iron and enables its timely and efficient release as needed during periods of heightened demand. Depending on the oxidative conditions of tissues and cells, and in addition to its ability to bind oxygen, it also has a nitrite reductase activity whereby it regulates the production of bioactive nitric oxide. Under stress conditions, like hypoxia and anoxia, it also protects cells against reactive oxygen species thanks to its pseudoperoxidase activity. The polypeptide is Myoglobin (MB) (Balaenoptera physalus (Fin whale)).